Reading from the N-terminus, the 1481-residue chain is Cystic fibrosis transmembrane conductance regulator (1481 aa).

The Cytoplasmic segment spans residues 1–77 (MQKSPLEKAG…KLINALRRCF (77 aa)). The chain crosses the membrane as a helical span at residues 78 to 98 (FWRFMFYGILLYLGEVTKAVQ). The region spanning 81–365 (FMFYGILLYL…WAVQTWYDSL (285 aa)) is the ABC transmembrane type-1 1 domain. Residues 99-122 (PLLLGRIIASYDPDNKVERSIAIY) are Extracellular-facing. A helical membrane pass occupies residues 123–146 (LGIGLCLLFVVRTLLLHPAIFGLH). The Cytoplasmic portion of the chain corresponds to 147–195 (HIGMQMRIAMFSLIYKKTLKLSSRVLDKISIGQLISLLSNNLNKFDEGL). A helical membrane pass occupies residues 196-216 (ALAHFVWISPLQVTLLMGLLW). The Extracellular portion of the chain corresponds to 217-222 (ELLQAS). Residues 223–243 (AFCGLAFLIVLALVQAGLGRM) form a helical membrane-spanning segment. At 244–298 (MMKYRDQRAGKINERLVITSEMIENIQSVKAYCWEEAMEKMIENLRQTELKLTRK) the chain is on the cytoplasmic side. The helical transmembrane segment at 299-319 (AAYVRYFNSSAFFFSGFFVVF) threads the bilayer. At 320–339 (LSVLPYALTKGIILRKIFTT) the chain is on the extracellular side. Residues 340-358 (ISFCIVLRMAVTRQFPWAV) form a helical membrane-spanning segment. At 359–858 (QTWYDSLGAI…YLRYITVHRS (500 aa)) the chain is on the cytoplasmic side. ATP is bound by residues Trp-401, Ser-434, 458–465 (GSTGAGKT), and Gln-493. The region spanning 423-646 (NGDNNLFFSN…RPDFSSKLMG (224 aa)) is the ABC transporter 1 domain. Cys-524 carries S-palmitoyl cysteine lipidation. A phosphoserine mark is found at Ser-549 and Ser-660. Residues 654–831 (SAERRNSILT…EEINEEDLKE (178 aa)) form a disordered R region region. Position 670 is a phosphoserine; by PKA (Ser-670). Phosphoserine is present on Ser-686. Lys-688 is covalently cross-linked (Glycyl lysine isopeptide (Lys-Gly) (interchain with G-Cter in ubiquitin)). Residues Ser-700 and Ser-712 each carry the phosphoserine modification. Thr-717 is modified (phosphothreonine). Ser-737, Ser-768, Ser-790, Ser-795, and Ser-813 each carry phosphoserine. The helical transmembrane segment at 859–879 (LIFVLIWCIVIFLAEVAASLV) threads the bilayer. The ABC transmembrane type-1 2 domain maps to 859 to 1155 (LIFVLIWCIV…AVNSSIDVDS (297 aa)). At 880-918 (VLWLFGNTAPQDKENSTKSGNSSYAVIITNTSSYYFFYI) the chain is on the extracellular side. 3 N-linked (GlcNAc...) asparagine glycosylation sites follow: Asn-894, Asn-900, and Asn-909. The discontinuously helical transmembrane segment at 919–939 (YVGVADTLLALGLFRGLPLVH) threads the bilayer. The Cytoplasmic portion of the chain corresponds to 940–990 (TLITVSKILHHKMLHSVLQAPMSTLNTLKAGGILNRFSKDIAILDDLLPLT). The chain crosses the membrane as a helical span at residues 991–1011 (IFDFIQLLLIVVGAIAVVSVL). Topologically, residues 1012–1013 (QP) are extracellular. Residues 1014 to 1034 (YIFLATVPVIAAFILLRAYFL) traverse the membrane as a helical segment. Topologically, residues 1035–1095 (HTSQQLKQLE…TANWFLYLST (61 aa)) are cytoplasmic. Residues 1096-1116 (LRWFQMRIEMIFVLFFIAVAF) form a helical membrane-spanning segment. Over 1117 to 1130 (ISILTTGEGEGRVG) the chain is Extracellular. Residues 1131–1151 (IILTLAMNIMSTLQWAVNSSI) traverse the membrane as a helical segment. Over 1152–1481 (DVDSLMRSVS…AEEEVQGTRL (330 aa)) the chain is Cytoplasmic. The ABC transporter 2 domain maps to 1199–1444 (VKKDDVWPSG…KSLFRQAISS (246 aa)). ATP-binding positions include Tyr-1220 and 1245–1252 (GRTGSGKS). The segment at 1387-1481 (RTLKQAFADC…AEEEVQGTRL (95 aa)) is interaction with GORASP2. A lipid anchor (S-palmitoyl cysteine) is attached at Cys-1396. Ser-1445 and Ser-1457 each carry phosphoserine. Residues 1449–1481 (KLFPHRNSSKHKSRPQITALKEEAEEEVQGTRL) are disordered. A compositionally biased stretch (basic residues) spans 1450–1462 (LFPHRNSSKHKSR). The segment covering 1471 to 1481 (EAEEEVQGTRL) has biased composition (acidic residues). The PDZ-binding motif lies at 1479 to 1481 (TRL).

This sequence belongs to the ABC transporter superfamily. ABCC family. CFTR transporter (TC 3.A.1.202) subfamily. In terms of assembly, monomer; does not require oligomerization for channel activity. May form oligomers in the membrane. Interacts with SLC26A3, SLC26A6 and NHERF1. Interacts with SHANK2. Interacts with MYO6. Interacts (via C-terminus) with GOPC (via PDZ domain); this promotes CFTR internalization and thereby decreases channel activity. Interacts with SLC4A7 through NHERF1. Found in a complex with MYO5B and RAB11A. Interacts with ANO1. Interacts with SLC26A8. Interacts with AHCYL1; the interaction increases CFTR activity. Interacts with CSE1L. The core-glycosylated form interacts with GORASP2 (via PDZ GRASP-type 1 domain) in respone to ER stress. Interacts with MARCHF2; the interaction leads to CFTR ubiqtuitination and degradation. Interacts with ADGRG2. N-glycosylated. In terms of processing, phosphorylated; cAMP treatment promotes phosphorylation and activates the channel. Dephosphorylation decreases the ATPase activity (in vitro). Phosphorylation at PKA sites activates the channel. Phosphorylation at PKC sites enhances the response to phosphorylation by PKA. Phosphorylated by AMPK; this inhibits channel activity. Post-translationally, ubiquitinated, leading to its degradation in the lysosome. Deubiquitination by USP10 in early endosomes enhances its endocytic recycling to the cell membrane. Ubiquitinated by RNF185 during ER stress. Ubiquitinated by MARCHF2. In terms of tissue distribution, isoform 1 is expressed in the pancreas. Isoform 2 is specifically expressed in the ventricle.

The protein resides in the apical cell membrane. It localises to the early endosome membrane. The protein localises to the cell membrane. It is found in the recycling endosome membrane. Its subcellular location is the endoplasmic reticulum membrane. The protein resides in the nucleus. The enzyme catalyses ATP + H2O + closed Cl(-) channel = ADP + phosphate + open Cl(-) channel.. It catalyses the reaction chloride(in) = chloride(out). It carries out the reaction hydrogencarbonate(in) = hydrogencarbonate(out). The catalysed reaction is ATP + H2O = ADP + phosphate + H(+). Epithelial ion channel that plays an important role in the regulation of epithelial ion and water transport and fluid homeostasis. Mediates the transport of chloride ions across the cell membrane. Possesses an intrinsic ATPase activity and utilizes ATP to gate its channel; the passive flow of anions through the channel is gated by cycles of ATP binding and hydrolysis by the ATP-binding domains. The ion channel is also permeable to HCO(3)(-); selectivity depends on the extracellular chloride concentration. Exerts its function also by modulating the activity of other ion channels and transporters. Contributes to the regulation of the pH and the ion content of the epithelial fluid layer. Modulates the activity of the epithelial sodium channel (ENaC) complex, in part by regulating the cell surface expression of the ENaC complex. May regulate bicarbonate secretion and salvage in epithelial cells by regulating the transporter SLC4A7. Can inhibit the chloride channel activity of ANO1. Plays a role in the chloride and bicarbonate homeostasis during sperm epididymal maturation and capacitation. The sequence is that of Cystic fibrosis transmembrane conductance regulator from Oryctolagus cuniculus (Rabbit).